A 685-amino-acid polypeptide reads, in one-letter code: Putative protein FAR1-RELATED SEQUENCE 10 (685 aa).

An FAR1 domain is found at 69 to 161 (EYYSTFARKS…SNVHNHELLE (93 aa)). Residues 292–388 (VVVFDTSYRS…FMSHIVSKLA (97 aa)) form the MULE domain. The SWIM-type zinc-finger motif lies at 565–603 (GECCVIWNPENEEIQCSCKEFEHSGILCRHTLRVLTVKN).

Belongs to the FHY3/FAR1 family.

This is Putative protein FAR1-RELATED SEQUENCE 10 (FRS10) from Arabidopsis thaliana (Mouse-ear cress).